A 186-amino-acid polypeptide reads, in one-letter code: Peptidyl-tRNA hydrolase (186 aa).

Y14 contributes to the tRNA binding site. H19 (proton acceptor) is an active-site residue. Residues Y64, N66, and N113 each contribute to the tRNA site.

This sequence belongs to the PTH family. As to quaternary structure, monomer.

The protein localises to the cytoplasm. It catalyses the reaction an N-acyl-L-alpha-aminoacyl-tRNA + H2O = an N-acyl-L-amino acid + a tRNA + H(+). In terms of biological role, hydrolyzes ribosome-free peptidyl-tRNAs (with 1 or more amino acids incorporated), which drop off the ribosome during protein synthesis, or as a result of ribosome stalling. Catalyzes the release of premature peptidyl moieties from peptidyl-tRNA molecules trapped in stalled 50S ribosomal subunits, and thus maintains levels of free tRNAs and 50S ribosomes. This chain is Peptidyl-tRNA hydrolase, found in Agathobacter rectalis (strain ATCC 33656 / DSM 3377 / JCM 17463 / KCTC 5835 / VPI 0990) (Eubacterium rectale).